The following is a 329-amino-acid chain: Lipoyl synthase (329 aa).

Residues C72, C77, C83, C98, C102, C105, and S313 each contribute to the [4Fe-4S] cluster site. In terms of domain architecture, Radical SAM core spans 83–303; the sequence is CWSHGTATIM…QIGLKKGFFE (221 aa).

This sequence belongs to the radical SAM superfamily. Lipoyl synthase family. [4Fe-4S] cluster serves as cofactor.

Its subcellular location is the cytoplasm. The enzyme catalyses [[Fe-S] cluster scaffold protein carrying a second [4Fe-4S](2+) cluster] + N(6)-octanoyl-L-lysyl-[protein] + 2 oxidized [2Fe-2S]-[ferredoxin] + 2 S-adenosyl-L-methionine + 4 H(+) = [[Fe-S] cluster scaffold protein] + N(6)-[(R)-dihydrolipoyl]-L-lysyl-[protein] + 4 Fe(3+) + 2 hydrogen sulfide + 2 5'-deoxyadenosine + 2 L-methionine + 2 reduced [2Fe-2S]-[ferredoxin]. It functions in the pathway protein modification; protein lipoylation via endogenous pathway; protein N(6)-(lipoyl)lysine from octanoyl-[acyl-carrier-protein]: step 2/2. Its function is as follows. Catalyzes the radical-mediated insertion of two sulfur atoms into the C-6 and C-8 positions of the octanoyl moiety bound to the lipoyl domains of lipoate-dependent enzymes, thereby converting the octanoylated domains into lipoylated derivatives. The protein is Lipoyl synthase of Legionella pneumophila (strain Paris).